A 196-amino-acid polypeptide reads, in one-letter code: DNA polymerase epsilon subunit D (196 aa).

The interval 125–196 (RKKEKLDSGE…ETRVQNLEQT (72 aa)) is disordered. Positions 133 to 143 (GEVDADGDIDM) are enriched in acidic residues. Residues 144-159 (GEDKENVPVEKVKEHD) are compositionally biased toward basic and acidic residues. The segment covering 160–173 (EIEEQGDALQDVEE) has biased composition (acidic residues). A compositionally biased stretch (basic and acidic residues) spans 174–188 (SSEKKQKTESQDVET). Residue Ser-183 is modified to Phosphoserine; by ATM or ATR.

DNA polymerase epsilon is a heterotetramer consisting of POL2, DPB2, DPB3 and DPB4. Component of the ISW2 complex, which at least consists of ISW2, ITC1, DLS1 and DPB4.

It is found in the nucleus. In terms of biological role, as accessory component of the DNA polymerase epsilon (DNA polymerase II) participates in chromosomal DNA replication. It is required during synthesis of the leading and lagging DNA strands at the replication fork and binds at/or near replication origins and moves along DNA with the replication fork. It has 3'-5' proofreading exonuclease activity that correct errors arising during DNA replication. It is also involved in DNA synthesis during DNA repair. Also functions as a component of the ISW2 complex, which acts in remodeling the chromatin by catalyzing an ATP-dependent alteration in the structure of nucleosomal DNA. The ISW2 complex is involved in coordinating transcriptional repression and in inheritance of telomeric silencing. It is involved in repression of MAT a-specific genes, INO1, and early meiotic genes during mitotic growth dependent upon transcription factor UME6 and in a parallel pathway to the RPD3-SIN3 histone deacetylase complex. In Saccharomyces cerevisiae (strain ATCC 204508 / S288c) (Baker's yeast), this protein is DNA polymerase epsilon subunit D (DPB4).